A 472-amino-acid polypeptide reads, in one-letter code: MNSTIAEAIKEEGIENYLKNQQHKSLLRFLTCGSVDDGKSTLIGRLLHDSRQVYEDQLKTLHSDSQKIGTTGEKLDFALLVDGLQAEREQGITIDVAYRYFSTPKRKFIIADTPGHEQYTRNMATGASTCDLAIILIDARRGVLEQTRRHSFIASLLGIRQFIVAVNKMDLVNFDEKVFDSIKKEYLEFASGLPKTDIRVVPISALDGENLVVNSELTPWYQGEPLLTMLENAEVGTRDLDLPFRMPVQLVSRPNLDFRGYMGTVAAGVVKPGDVVKVLPSGKESKVKRIVTFDGDLDYALPGEAVTITLEDEIDISRGDLLVAPDAETQVTQHVLANVVWMTEEPLQANRQYDIKLATRKTRGHVDAIRHRIDVNTLEKHDATELKLNEIGLLELSLTNAVGVDPYNTVRDTGSFIIIDRLSNVTIGAGMVVEALAGKTAGKAEFSEFELEFNALVRKHFPHWQALDISKL.

A tr-type G domain is found at 24 to 240 (KSLLRFLTCG…ENAEVGTRDL (217 aa)). Residues 33 to 40 (GSVDDGKS) are G1. Residue 33–40 (GSVDDGKS) participates in GTP binding. Residues 91–95 (GITID) are G2. The segment at 112-115 (DTPG) is G3. Residues 112-116 (DTPGH) and 167-170 (NKMD) each bind GTP. Positions 167–170 (NKMD) are G4. The G5 stretch occupies residues 204–206 (SAL).

Belongs to the TRAFAC class translation factor GTPase superfamily. Classic translation factor GTPase family. CysN/NodQ subfamily. In terms of assembly, heterodimer composed of CysD, the smaller subunit, and CysN.

The catalysed reaction is sulfate + ATP + H(+) = adenosine 5'-phosphosulfate + diphosphate. It participates in sulfur metabolism; hydrogen sulfide biosynthesis; sulfite from sulfate: step 1/3. Its function is as follows. With CysD forms the ATP sulfurylase (ATPS) that catalyzes the adenylation of sulfate producing adenosine 5'-phosphosulfate (APS) and diphosphate, the first enzymatic step in sulfur assimilation pathway. APS synthesis involves the formation of a high-energy phosphoric-sulfuric acid anhydride bond driven by GTP hydrolysis by CysN coupled to ATP hydrolysis by CysD. The chain is Sulfate adenylyltransferase subunit 1 from Tolumonas auensis (strain DSM 9187 / NBRC 110442 / TA 4).